The sequence spans 334 residues: Galactosylgalactosylxylosylprotein 3-beta-glucuronosyltransferase 1 (334 aa).

The Cytoplasmic portion of the chain corresponds to 1–6 (MPKRRD). Residues 3 to 5 (KRR) are essential for transport from endoplasmic reticulum to Golgi apparatus and interaction with SAR1A. Residues 7–27 (ILAIVLIVLPWTLLITVWHQS) traverse the membrane as a helical; Signal-anchor for type II membrane protein segment. The Lumenal segment spans residues 28 to 334 (SLAPLLAVHK…KGFTDPSVEI (307 aa)). Residue 91 to 93 (PTY) participates in UDP-alpha-D-glucuronate binding. Residues threonine 103 and threonine 108 each carry the phosphothreonine modification. Aspartate 122 lines the UDP-alpha-D-glucuronate pocket. N-linked (GlcNAc...) asparagine glycosylation occurs at asparagine 140. UDP-alpha-D-glucuronate contacts are provided by arginine 165 and arginine 170. The N-linked (GlcNAc...) asparagine glycan is linked to asparagine 184. 195–197 (DDD) serves as a coordination point for UDP-alpha-D-glucuronate. Residue aspartate 197 participates in Mn(2+) binding. The interval 245-254 (FDPHRPFAID) is interaction with galactose moiety of substrate glycoprotein. The Proton donor/acceptor role is filled by glutamate 284. Asparagine 303 carries N-linked (GlcNAc...) asparagine glycosylation. 311-313 (HTR) serves as a coordination point for UDP-alpha-D-glucuronate.

The protein belongs to the glycosyltransferase 43 family. In terms of assembly, homodimer. Interacts with SAR1A. The cofactor is Mn(2+). Post-translationally, the soluble form derives from the membrane form by proteolytic processing.

Its subcellular location is the golgi apparatus membrane. It is found in the secreted. It localises to the endoplasmic reticulum membrane. The enzyme catalyses 3-O-(beta-D-galactosyl-(1-&gt;3)-beta-D-galactosyl-(1-&gt;4)-beta-D-xylosyl)-L-seryl-[protein] + UDP-alpha-D-glucuronate = 3-O-(beta-D-GlcA-(1-&gt;3)-beta-D-Gal-(1-&gt;3)-beta-D-Gal-(1-&gt;4)-beta-D-Xyl)-L-seryl-[protein] + UDP + H(+). It functions in the pathway protein modification; protein glycosylation. In terms of biological role, involved in the biosynthesis of L2/HNK-1 carbohydrate epitope on glycoproteins. Can also play a role in glycosaminoglycan biosynthesis. Substrates include asialo-orosomucoid (ASOR), asialo-fetuin, and asialo-neural cell adhesion molecule. Requires sphingomyelin for activity: stearoyl-sphingomyelin was the most effective, followed by palmitoyl-sphingomyelin and lignoceroyl-sphingomyelin. Activity was demonstrated only for sphingomyelin with a saturated fatty acid and not for that with an unsaturated fatty acid, regardless of the length of the acyl group. The sequence is that of Galactosylgalactosylxylosylprotein 3-beta-glucuronosyltransferase 1 from Mus musculus (Mouse).